The primary structure comprises 28 residues: Beta-bungarotoxin B chain-like (28 aa).

The first 24 residues, 1–24, serve as a signal peptide directing secretion; it reads MSSGGLLLLLGLLTLCAELTPVSS.

Heterodimer; disulfide-linked. The A chains have phospholipase A2 activity and the B chains show homology with the basic protease inhibitors. In terms of tissue distribution, expressed by the venom gland.

Its subcellular location is the secreted. In terms of biological role, beta-1-bungarotoxin is a presynaptic neurotoxin of the venom. The B chain is homologous to venom basic protease inhibitors but has no protease inhibitor activity and blocks voltage-gated potassium channels (Kv). This Bungarus multicinctus (Many-banded krait) protein is Beta-bungarotoxin B chain-like.